Here is a 597-residue protein sequence, read N- to C-terminus: Elongation factor 4 (597 aa).

One can recognise a tr-type G domain in the interval 2–184 (NNIRNFSIIA…ALIAKVPPPK (183 aa)). Residues 14-19 (DHGKST) and 131-134 (NKID) contribute to the GTP site.

This sequence belongs to the TRAFAC class translation factor GTPase superfamily. Classic translation factor GTPase family. LepA subfamily.

It localises to the cell inner membrane. The catalysed reaction is GTP + H2O = GDP + phosphate + H(+). Required for accurate and efficient protein synthesis under certain stress conditions. May act as a fidelity factor of the translation reaction, by catalyzing a one-codon backward translocation of tRNAs on improperly translocated ribosomes. Back-translocation proceeds from a post-translocation (POST) complex to a pre-translocation (PRE) complex, thus giving elongation factor G a second chance to translocate the tRNAs correctly. Binds to ribosomes in a GTP-dependent manner. This chain is Elongation factor 4, found in Herminiimonas arsenicoxydans.